We begin with the raw amino-acid sequence, 89 residues long: Small ribosomal subunit protein uS15 (89 aa).

The span at 1–10 (MPLNTEKKQE) shows a compositional bias: basic and acidic residues. Residues 1-22 (MPLNTEKKQELINSHQTHATDT) form a disordered region. The segment covering 11 to 22 (LINSHQTHATDT) has biased composition (polar residues).

This sequence belongs to the universal ribosomal protein uS15 family. As to quaternary structure, part of the 30S ribosomal subunit. Forms a bridge to the 50S subunit in the 70S ribosome, contacting the 23S rRNA.

In terms of biological role, one of the primary rRNA binding proteins, it binds directly to 16S rRNA where it helps nucleate assembly of the platform of the 30S subunit by binding and bridging several RNA helices of the 16S rRNA. Forms an intersubunit bridge (bridge B4) with the 23S rRNA of the 50S subunit in the ribosome. This is Small ribosomal subunit protein uS15 from Synechococcus sp. (strain RCC307).